Consider the following 353-residue polypeptide: Uroporphyrinogen decarboxylase (353 aa).

Residues 29–33 (RQAGR), aspartate 79, tyrosine 156, threonine 211, and histidine 329 contribute to the substrate site.

Belongs to the uroporphyrinogen decarboxylase family. In terms of assembly, homodimer.

It localises to the cytoplasm. It catalyses the reaction uroporphyrinogen III + 4 H(+) = coproporphyrinogen III + 4 CO2. The protein operates within porphyrin-containing compound metabolism; protoporphyrin-IX biosynthesis; coproporphyrinogen-III from 5-aminolevulinate: step 4/4. In terms of biological role, catalyzes the decarboxylation of four acetate groups of uroporphyrinogen-III to yield coproporphyrinogen-III. The polypeptide is Uroporphyrinogen decarboxylase (Alcanivorax borkumensis (strain ATCC 700651 / DSM 11573 / NCIMB 13689 / SK2)).